We begin with the raw amino-acid sequence, 359 residues long: Phosphate acyltransferase (359 aa).

This sequence belongs to the PlsX family. Homodimer. Probably interacts with PlsY.

The protein resides in the cytoplasm. It catalyses the reaction a fatty acyl-[ACP] + phosphate = an acyl phosphate + holo-[ACP]. The protein operates within lipid metabolism; phospholipid metabolism. In terms of biological role, catalyzes the reversible formation of acyl-phosphate (acyl-PO(4)) from acyl-[acyl-carrier-protein] (acyl-ACP). This enzyme utilizes acyl-ACP as fatty acyl donor, but not acyl-CoA. The protein is Phosphate acyltransferase of Koribacter versatilis (strain Ellin345).